Consider the following 96-residue polypeptide: Large ribosomal subunit protein bL27 (96 aa).

A propeptide spanning residues 1–9 (MLRLDLQFF) is cleaved from the precursor. A disordered region spans residues 14 to 36 (GVGSTKNGRDSQSKRLGAKRADG).

Belongs to the bacterial ribosomal protein bL27 family. In terms of processing, the N-terminus is cleaved by ribosomal processing cysteine protease Prp.

This chain is Large ribosomal subunit protein bL27, found in Bacillus anthracis (strain A0248).